Here is a 53-residue protein sequence, read N- to C-terminus: UPF0391 membrane protein gsr2640 (53 aa).

Transmembrane regions (helical) follow at residues 4 to 24 (LLWL…GGVV) and 32 to 49 (WFLI…FVTG).

Belongs to the UPF0391 family.

The protein localises to the cell membrane. This chain is UPF0391 membrane protein gsr2640, found in Gloeobacter violaceus (strain ATCC 29082 / PCC 7421).